We begin with the raw amino-acid sequence, 289 residues long: ATP synthase gamma chain (289 aa).

Belongs to the ATPase gamma chain family. As to quaternary structure, F-type ATPases have 2 components, CF(1) - the catalytic core - and CF(0) - the membrane proton channel. CF(1) has five subunits: alpha(3), beta(3), gamma(1), delta(1), epsilon(1). CF(0) has three main subunits: a, b and c.

The protein localises to the cell inner membrane. Functionally, produces ATP from ADP in the presence of a proton gradient across the membrane. The gamma chain is believed to be important in regulating ATPase activity and the flow of protons through the CF(0) complex. This Coxiella burnetii (strain CbuK_Q154) (Coxiella burnetii (strain Q154)) protein is ATP synthase gamma chain.